Reading from the N-terminus, the 321-residue chain is Translation initiation factor eIF2B subunit alpha (321 aa).

It belongs to the eIF-2B alpha/beta/delta subunits family. Component of the translation initiation factor 2B (eIF2B) complex which is a heterodecamer of two sets of five different subunits: alpha, beta, gamma, delta and epsilon. Subunits alpha, beta and delta comprise a regulatory subcomplex and subunits epsilon and gamma comprise a catalytic subcomplex. Within the complex, the hexameric regulatory complex resides at the center, with the two heterodimeric catalytic subcomplexes bound on opposite sides.

The protein localises to the cytoplasm. Its subcellular location is the cytosol. Its function is as follows. Acts as a component of the translation initiation factor 2B (eIF2B) complex, which catalyzes the exchange of GDP for GTP on eukaryotic initiation factor 2 (eIF2) gamma subunit. Its guanine nucleotide exchange factor activity is repressed when bound to eIF2 complex phosphorylated on the alpha subunit, thereby limiting the amount of methionyl-initiator methionine tRNA available to the ribosome and consequently global translation is repressed. The polypeptide is Translation initiation factor eIF2B subunit alpha (eif2b1) (Dictyostelium discoideum (Social amoeba)).